We begin with the raw amino-acid sequence, 274 residues long: Large ribosomal subunit protein uL2c (274 aa).

Residues 224–274 (NPVDHPHGGGEGRAPIGRKKPTTPWGYPALGRKSRKRNKYSEKFILRHRSK) form a disordered region.

Belongs to the universal ribosomal protein uL2 family. As to quaternary structure, part of the 50S ribosomal subunit.

Its subcellular location is the plastid. It localises to the chloroplast. The protein is Large ribosomal subunit protein uL2c (rpl2) of Ipomoea purpurea (Common morning glory).